Here is a 347-residue protein sequence, read N- to C-terminus: NADH-ubiquinone oxidoreductase chain 2 (347 aa).

11 helical membrane-spanning segments follow: residues 2 to 22, 25 to 45, 56 to 76, 96 to 116, 122 to 142, 149 to 169, 178 to 197, 202 to 219, 241 to 261, 278 to 298, and 326 to 346; these read SPYV…MTLI, HWLT…PLMT, AIKY…SAIF, FMMT…FWVP, IPLL…ISIF, LNMS…GWGG, ILAY…IMIY, ILNL…FMVL, MIII…TGFM, LAMM…RIIY, and IPTL…FITL.

It belongs to the complex I subunit 2 family.

The protein resides in the mitochondrion inner membrane. It catalyses the reaction a ubiquinone + NADH + 5 H(+)(in) = a ubiquinol + NAD(+) + 4 H(+)(out). Its function is as follows. Core subunit of the mitochondrial membrane respiratory chain NADH dehydrogenase (Complex I) that is believed to belong to the minimal assembly required for catalysis. Complex I functions in the transfer of electrons from NADH to the respiratory chain. The immediate electron acceptor for the enzyme is believed to be ubiquinone. This Didelphis virginiana (North American opossum) protein is NADH-ubiquinone oxidoreductase chain 2 (MT-ND2).